Here is a 456-residue protein sequence, read N- to C-terminus: 26S proteasome non-ATPase regulatory subunit 12 (456 aa).

A2 bears the N-acetylalanine mark. K92 participates in a covalent cross-link: Glycyl lysine isopeptide (Lys-Gly) (interchain with G-Cter in SUMO1); alternate. K92 is covalently cross-linked (Glycyl lysine isopeptide (Lys-Gly) (interchain with G-Cter in SUMO2); alternate). N6-acetyllysine occurs at positions 221 and 368. The region spanning 242–420 (SICKHYRAIY…GIINFQRPKD (179 aa)) is the PCI domain.

The protein belongs to the proteasome subunit p55 family. Component of the 19S proteasome regulatory particle complex. The 26S proteasome consists of a 20S core particle (CP) and two 19S regulatory subunits (RP). The regulatory particle is made of a lid composed of 9 subunits including PSMD12, a base containing 6 ATPases and few additional components. Interacts with ERCC6.

In terms of biological role, component of the 26S proteasome, a multiprotein complex involved in the ATP-dependent degradation of ubiquitinated proteins. This complex plays a key role in the maintenance of protein homeostasis by removing misfolded or damaged proteins, which could impair cellular functions, and by removing proteins whose functions are no longer required. Therefore, the proteasome participates in numerous cellular processes, including cell cycle progression, apoptosis, or DNA damage repair. The sequence is that of 26S proteasome non-ATPase regulatory subunit 12 (PSMD12) from Bos taurus (Bovine).